The following is an 81-amino-acid chain: ATP synthase subunit c (81 aa).

The next 2 membrane-spanning stretches (helical) occupy residues 7–27 and 55–75; these read LVAIASAILIAFGALGTAIGF and IAGLLDAVPMIGVGIGLFFIF.

Belongs to the ATPase C chain family. In terms of assembly, F-type ATPases have 2 components, F(1) - the catalytic core - and F(0) - the membrane proton channel. F(1) has five subunits: alpha(3), beta(3), gamma(1), delta(1), epsilon(1). F(0) has three main subunits: a(1), b(2) and c(10-14). The alpha and beta chains form an alternating ring which encloses part of the gamma chain. F(1) is attached to F(0) by a central stalk formed by the gamma and epsilon chains, while a peripheral stalk is formed by the delta and b chains.

It is found in the cell inner membrane. Functionally, f(1)F(0) ATP synthase produces ATP from ADP in the presence of a proton or sodium gradient. F-type ATPases consist of two structural domains, F(1) containing the extramembraneous catalytic core and F(0) containing the membrane proton channel, linked together by a central stalk and a peripheral stalk. During catalysis, ATP synthesis in the catalytic domain of F(1) is coupled via a rotary mechanism of the central stalk subunits to proton translocation. Its function is as follows. Key component of the F(0) channel; it plays a direct role in translocation across the membrane. A homomeric c-ring of between 10-14 subunits forms the central stalk rotor element with the F(1) delta and epsilon subunits. This is ATP synthase subunit c from Acinetobacter baumannii (strain ACICU).